The sequence spans 469 residues: UDP-N-acetylmuramoylalanine--D-glutamate ligase (469 aa).

110–116 (GTNGKST) contributes to the ATP binding site.

This sequence belongs to the MurCDEF family.

The protein localises to the cytoplasm. The enzyme catalyses UDP-N-acetyl-alpha-D-muramoyl-L-alanine + D-glutamate + ATP = UDP-N-acetyl-alpha-D-muramoyl-L-alanyl-D-glutamate + ADP + phosphate + H(+). Its pathway is cell wall biogenesis; peptidoglycan biosynthesis. In terms of biological role, cell wall formation. Catalyzes the addition of glutamate to the nucleotide precursor UDP-N-acetylmuramoyl-L-alanine (UMA). This is UDP-N-acetylmuramoylalanine--D-glutamate ligase from Synechococcus sp. (strain JA-3-3Ab) (Cyanobacteria bacterium Yellowstone A-Prime).